A 231-amino-acid polypeptide reads, in one-letter code: Aquaporin Z (231 aa).

The next 2 membrane-spanning stretches (helical) occupy residues 11 to 31 (FLGT…AAAF) and 36 to 56 (IGLL…AFAI). The NPA 1 signature appears at 65-67 (NPA). Transmembrane regions (helical) follow at residues 84 to 104 (LPYI…LYLI), 132 to 152 (MISV…VILG), and 161 to 181 (GFAP…SIPI). The NPA 2 motif lies at 187–189 (NPA). A helical membrane pass occupies residues 203 to 223 (VSQLWLFWAAPIIGAILAGVI).

Belongs to the MIP/aquaporin (TC 1.A.8) family. As to quaternary structure, homotetramer.

It localises to the cell inner membrane. The enzyme catalyses H2O(in) = H2O(out). Functionally, channel that permits osmotically driven movement of water in both directions. It is involved in the osmoregulation and in the maintenance of cell turgor during volume expansion in rapidly growing cells. It mediates rapid entry or exit of water in response to abrupt changes in osmolarity. The chain is Aquaporin Z from Shewanella oneidensis (strain ATCC 700550 / JCM 31522 / CIP 106686 / LMG 19005 / NCIMB 14063 / MR-1).